The following is a 260-amino-acid chain: Phosphatidylglycerol--prolipoprotein diacylglyceryl transferase (260 aa).

A run of 3 helical transmembrane segments spans residues 16–36 (LEFRWYGLMYILGFIAAYFIV), 55–75 (VIFSLAIGVILGGRLGYILFY), and 87–107 (LFAVWEGGMSFHGGLLGVILA). A 1,2-diacyl-sn-glycero-3-phospho-(1'-sn-glycerol) is bound at residue Arg138. 2 consecutive transmembrane segments (helical) span residues 198–218 (GVVFWTFIAFYGLFRFLVEFF) and 232–252 (FSMGQLLSFPMFLLGLTMAVL).

Belongs to the Lgt family.

It is found in the cell inner membrane. The enzyme catalyses L-cysteinyl-[prolipoprotein] + a 1,2-diacyl-sn-glycero-3-phospho-(1'-sn-glycerol) = an S-1,2-diacyl-sn-glyceryl-L-cysteinyl-[prolipoprotein] + sn-glycerol 1-phosphate + H(+). It participates in protein modification; lipoprotein biosynthesis (diacylglyceryl transfer). In terms of biological role, catalyzes the transfer of the diacylglyceryl group from phosphatidylglycerol to the sulfhydryl group of the N-terminal cysteine of a prolipoprotein, the first step in the formation of mature lipoproteins. The sequence is that of Phosphatidylglycerol--prolipoprotein diacylglyceryl transferase from Geobacter sulfurreducens (strain ATCC 51573 / DSM 12127 / PCA).